A 166-amino-acid polypeptide reads, in one-letter code: Phosphopantetheine adenylyltransferase (166 aa).

Ser-9 is a binding site for substrate. Residues Ser-9–Phe-10 and His-17 each bind ATP. Substrate-binding residues include Lys-41, Leu-74, and Lys-88. Residues Gly-89–Arg-91, Glu-99, and Tyr-123–Thr-129 contribute to the ATP site.

The protein belongs to the bacterial CoaD family. In terms of assembly, homohexamer. The cofactor is Mg(2+).

Its subcellular location is the cytoplasm. The catalysed reaction is (R)-4'-phosphopantetheine + ATP + H(+) = 3'-dephospho-CoA + diphosphate. It participates in cofactor biosynthesis; coenzyme A biosynthesis; CoA from (R)-pantothenate: step 4/5. Its function is as follows. Reversibly transfers an adenylyl group from ATP to 4'-phosphopantetheine, yielding dephospho-CoA (dPCoA) and pyrophosphate. This chain is Phosphopantetheine adenylyltransferase, found in Pseudarthrobacter chlorophenolicus (strain ATCC 700700 / DSM 12829 / CIP 107037 / JCM 12360 / KCTC 9906 / NCIMB 13794 / A6) (Arthrobacter chlorophenolicus).